The following is a 383-amino-acid chain: Ovalbumin (383 aa).

Gly2 is subject to N-acetylglycine. A signal peptide (not cleaved) is located at residues 22 to 48; that stretch reads HHANDNMLYSPFAILSTLAMVFLGAKD. Ser69 carries the post-translational modification Phosphoserine. An intrachain disulfide couples Cys74 to Cys121. N-linked (GlcNAc...) asparagine glycosylation is found at Asn293 and Asn312. Ser345 carries the post-translational modification Phosphoserine.

Belongs to the serpin family. Ov-serpin subfamily. The signal sequence is not cleaved. The functional signal for membrane translocation of ovalbumin becomes accessible when the nascent chain is 50 to 60 residues long. The hydrophobic sequence which lies between residues 27 and 43 folds back on the preceding residues to form an amphipathic hairpin structure which is the signal element recognized by the membrane. In terms of tissue distribution, major protein of egg white.

The protein localises to the secreted. Functionally, storage protein of egg white. Lack protease inhibitory activity. This is Ovalbumin (SERPINB14) from Coturnix coturnix (Common quail).